The chain runs to 277 residues: MSGIPFPAIDPVAVELGPIVIRWYALAYLAGFLFGWWYCTRLARAIPGRPTPDDLSEFLTWAIVGVLLGGRLGFVLFYNLDYYIQHPLQALAIWSGGMSFHGGLTGIVAAILLYGWRHGFSPFALGDLVAVAGPVGLFLGRIANFVNGELWGRPAPDLPWAVIFPDPRAGGVPRHPSQLYEAALEGLVLFAVLAWLASKPAVRERTGTLSGTFLVGYGIARILGEVFREPDVQIGYLAFGVTMGQILSVPMVLIGLWILVRAPFGPVRTPAAAAAGR.

A run of 4 helical transmembrane segments spans residues 16–36 (LGPI…LFGW), 58–78 (FLTW…VLFY), 93–113 (IWSG…AILL), and 119–139 (GFSP…GLFL). Arg-141 contributes to the a 1,2-diacyl-sn-glycero-3-phospho-(1'-sn-glycerol) binding site. Helical transmembrane passes span 182–202 (AALE…KPAV), 207–227 (GTLS…GEVF), and 239–259 (FGVT…LWIL).

Belongs to the Lgt family.

Its subcellular location is the cell inner membrane. It carries out the reaction L-cysteinyl-[prolipoprotein] + a 1,2-diacyl-sn-glycero-3-phospho-(1'-sn-glycerol) = an S-1,2-diacyl-sn-glyceryl-L-cysteinyl-[prolipoprotein] + sn-glycerol 1-phosphate + H(+). It functions in the pathway protein modification; lipoprotein biosynthesis (diacylglyceryl transfer). Catalyzes the transfer of the diacylglyceryl group from phosphatidylglycerol to the sulfhydryl group of the N-terminal cysteine of a prolipoprotein, the first step in the formation of mature lipoproteins. This Rhodospirillum centenum (strain ATCC 51521 / SW) protein is Phosphatidylglycerol--prolipoprotein diacylglyceryl transferase.